The following is a 132-amino-acid chain: Holo-[acyl-carrier-protein] synthase (132 aa).

Residues Asp-8 and Glu-57 each coordinate Mg(2+).

The protein belongs to the P-Pant transferase superfamily. AcpS family. Requires Mg(2+) as cofactor.

Its subcellular location is the cytoplasm. The catalysed reaction is apo-[ACP] + CoA = holo-[ACP] + adenosine 3',5'-bisphosphate + H(+). Functionally, transfers the 4'-phosphopantetheine moiety from coenzyme A to a Ser of acyl-carrier-protein. This chain is Holo-[acyl-carrier-protein] synthase, found in Methylobacterium nodulans (strain LMG 21967 / CNCM I-2342 / ORS 2060).